A 61-amino-acid polypeptide reads, in one-letter code: Metallothionein-2 (61 aa).

M1 carries the post-translational modification N-acetylmethionine. The interval M1–C29 is beta. The a divalent metal cation site is built by C5, C7, C13, C15, C19, C21, C24, C26, C29, C33, C34, C36, C37, C41, C44, C48, C50, and C57. Positions K30–A61 are alpha. S58 carries the post-translational modification Phosphoserine. The a divalent metal cation site is built by C59 and C60.

The protein belongs to the metallothionein superfamily. Type 1 family. Interacts with EOLA1.

In terms of biological role, metallothioneins have a high content of cysteine residues that bind various heavy metals; these proteins are transcriptionally regulated by both heavy metals and glucocorticoids. This chain is Metallothionein-2 (MT2A), found in Ovis aries (Sheep).